The chain runs to 222 residues: Exosome complex component Rrp4 (222 aa).

One can recognise an S1 motif domain in the interval 63 to 131 (GDLVIGRVTG…EINRVKLTLR (69 aa)).

It belongs to the RRP4 family. As to quaternary structure, component of the archaeal exosome complex. Forms a trimer of Rrp4 and/or Csl4 subunits. The trimer associates with a hexameric ring-like arrangement composed of 3 Rrp41-Rrp42 heterodimers.

The protein resides in the cytoplasm. Its function is as follows. Non-catalytic component of the exosome, which is a complex involved in RNA degradation. Increases the RNA binding and the efficiency of RNA degradation. Confers strong poly(A) specificity to the exosome. The sequence is that of Exosome complex component Rrp4 from Methanosphaera stadtmanae (strain ATCC 43021 / DSM 3091 / JCM 11832 / MCB-3).